The primary structure comprises 493 residues: Probable cytosol aminopeptidase (493 aa).

Positions 258 and 263 each coordinate Mn(2+). The active site involves K270. Positions 281, 340, and 342 each coordinate Mn(2+). Residue R344 is part of the active site.

It belongs to the peptidase M17 family. The cofactor is Mn(2+).

The protein localises to the cytoplasm. It catalyses the reaction Release of an N-terminal amino acid, Xaa-|-Yaa-, in which Xaa is preferably Leu, but may be other amino acids including Pro although not Arg or Lys, and Yaa may be Pro. Amino acid amides and methyl esters are also readily hydrolyzed, but rates on arylamides are exceedingly low.. It carries out the reaction Release of an N-terminal amino acid, preferentially leucine, but not glutamic or aspartic acids.. Presumably involved in the processing and regular turnover of intracellular proteins. Catalyzes the removal of unsubstituted N-terminal amino acids from various peptides. This chain is Probable cytosol aminopeptidase, found in Caulobacter vibrioides (strain ATCC 19089 / CIP 103742 / CB 15) (Caulobacter crescentus).